A 454-amino-acid polypeptide reads, in one-letter code: UPF0210 protein Blon_2054/BLIJ_2131 (454 aa).

This sequence belongs to the UPF0210 family. As to quaternary structure, homodimer.

The sequence is that of UPF0210 protein Blon_2054/BLIJ_2131 from Bifidobacterium longum subsp. infantis (strain ATCC 15697 / DSM 20088 / JCM 1222 / NCTC 11817 / S12).